The sequence spans 400 residues: WD repeat and FYVE domain-containing protein 2 (400 aa).

WD repeat units follow at residues 22–61 (GSQE…QYWP), 66–105 (AMPS…NKMT), 112–150 (AHQS…QRLG), 153–192 (RTSA…CTLV), 197–236 (GHTG…GTAI), and 240–279 (GHND…QETP). Residues 281 to 352 (WLDSDSCQKC…VCDSCHEAIT (72 aa)) form an FYVE-type zinc finger. The Zn(2+) site is built by Cys-287, Cys-290, Cys-314, Cys-317, Cys-322, Cys-325, Cys-344, and Cys-347. One copy of the WD 7 repeat lies at 364 to 399 (DSKHNIVHVHFDATRGWLLTSGTDKVIKLWDMTPVV).

As to quaternary structure, homodimer. Interacts (via WD repeats 1-3) with AKT1, AKT2, PRKCZ and PRKCI. Interacts with VAMP2. Forms a complex with VAMP2 and PRKCZ. Interacts with FOXO1. Forms a complex with AKT1 and FOXO1.

Its subcellular location is the endosome. The protein localises to the early endosome. It localises to the cytoplasm. Acts in an adapter protein-like fashion to mediate the interaction between the kinase PRKCZ and its substrate VAMP2 and increases the PRKCZ-dependent phosphorylation of VAMP2. Positively regulates adipocyte differentiation, by facilitating the phosphorylation and thus inactivation of the anti-adipogenetic transcription factor FOXO1 by the kinase AKT1. Plays a role in endosomal control of AKT2 signaling; required for insulin-stimulated AKT2 phosphorylation and glucose uptake and insulin-stimulated phosphorylation of AKT2 substrates. Participates in transferrin receptor endocytosis. The chain is WD repeat and FYVE domain-containing protein 2 (WDFY2) from Homo sapiens (Human).